Reading from the N-terminus, the 76-residue chain is DNA-directed RNA polymerase subunit omega (76 aa).

The protein belongs to the RNA polymerase subunit omega family. As to quaternary structure, in cyanobacteria the RNAP catalytic core is composed of 2 alpha, 1 beta, 1 beta', 1 gamma and 1 omega subunit. When a sigma factor is associated with the core the holoenzyme is formed, which can initiate transcription.

It catalyses the reaction RNA(n) + a ribonucleoside 5'-triphosphate = RNA(n+1) + diphosphate. Promotes RNA polymerase assembly. Latches the N- and C-terminal regions of the beta' subunit thereby facilitating its interaction with the beta and alpha subunits. This Acaryochloris marina (strain MBIC 11017) protein is DNA-directed RNA polymerase subunit omega.